Consider the following 448-residue polypeptide: Fumarate hydratase class II (448 aa).

Residues 83–85 (SGT), 113–116 (HPND), 123–125 (SSN), and T171 each bind substrate. The active-site Proton donor/acceptor is the H172. Residue S302 is part of the active site. Substrate-binding positions include S303 and 308–310 (KVN).

The protein belongs to the class-II fumarase/aspartase family. Fumarase subfamily. As to quaternary structure, homotetramer.

The protein localises to the cytoplasm. It catalyses the reaction (S)-malate = fumarate + H2O. It functions in the pathway carbohydrate metabolism; tricarboxylic acid cycle; (S)-malate from fumarate: step 1/1. Involved in the TCA cycle. Catalyzes the stereospecific interconversion of fumarate to L-malate. In Blochmanniella floridana, this protein is Fumarate hydratase class II.